The chain runs to 1010 residues: Sodium/potassium-transporting ATPase subunit alpha-3 (1010 aa).

The interval 1–21 (MGDKGEKESPKKGKGKRDLDD) is disordered. The Cytoplasmic segment spans residues 1–74 (MGDKGEKESP…NALTPPPTTP (74 aa)). Positions 69–71 (PPP) are interaction with phosphoinositide-3 kinase. The helical transmembrane segment at 75 to 95 (EWVKFCRQLFGGFSILLWIGA) threads the bilayer. Residues 96–118 (ILCFLAYGIQAGTEDEPSNDNLY) lie on the Extracellular side of the membrane. The chain crosses the membrane as a helical span at residues 119-139 (LGIVLAAVVIITGCFSYYQEA). The Cytoplasmic portion of the chain corresponds to 140 to 275 (KSSKIMESFK…VGKTPIAVEI (136 aa)). The helical transmembrane segment at 276-295 (EHFIQLITGVAVFLGISFFV) threads the bilayer. At 296-307 (LSLILGYTWLEA) the chain is on the extracellular side. The chain crosses the membrane as a helical span at residues 308–325 (VIFLIGIIVANVPEGLLA). At 326-759 (TVTVCLTLTA…EEGRLIFDNL (434 aa)) the chain is on the cytoplasmic side. Aspartate 363 functions as the 4-aspartylphosphate intermediate in the catalytic mechanism. The Mg(2+) site is built by aspartate 704 and aspartate 708. A helical transmembrane segment spans residues 760–779 (KKSIAYTLTSNIPEITPFLL). Topologically, residues 780 to 789 (FIMANIPLPL) are extracellular. The helical transmembrane segment at 790–810 (GTITILCIDLGTDMVPAISLA) threads the bilayer. Topologically, residues 811–830 (YEAAESDIMKRQPRNPRSDK) are cytoplasmic. A helical membrane pass occupies residues 831–853 (LVNERLISMAYGQIGMIQALGGF). Over 854 to 905 (FSYFVILAENGFLPSCLVGIRLSWDDRTINDLEDSYGQQWTYEQRKVVEFTC) the chain is Extracellular. The helical transmembrane segment at 906–925 (HTAFFVSIVVVQWADLIICK) threads the bilayer. The Cytoplasmic portion of the chain corresponds to 926–938 (TRRNSVFQQGMKN). Phosphoserine; by PKA is present on serine 930. Residues 939–957 (KILIFGLFEETALAAFLSY) form a helical membrane-spanning segment. At 958 to 972 (CPGMDVALRMYPLKP) the chain is on the extracellular side. The helical transmembrane segment at 973 to 993 (SWWFCAFPYSFLIFVYDEIRK) threads the bilayer. Topologically, residues 994-1010 (LILRRNPGGWVEKETYY) are cytoplasmic.

The protein belongs to the cation transport ATPase (P-type) (TC 3.A.3) family. Type IIC subfamily. The sodium/potassium-transporting ATPase is composed of a catalytic alpha subunit, an auxiliary non-catalytic beta subunit and an additional regulatory subunit.

The protein resides in the cell membrane. The catalysed reaction is K(+)(out) + Na(+)(in) + ATP + H2O = K(+)(in) + Na(+)(out) + ADP + phosphate + H(+). In terms of biological role, this is the catalytic component of the active enzyme, which catalyzes the hydrolysis of ATP coupled with the exchange of sodium and potassium ions across the plasma membrane. This action creates the electrochemical gradient of sodium and potassium ions, providing the energy for active transport of various nutrients. This chain is Sodium/potassium-transporting ATPase subunit alpha-3 (ATP1A3), found in Gallus gallus (Chicken).